Consider the following 225-residue polypeptide: Uracil-DNA glycosylase (225 aa).

Asp-65 acts as the Proton acceptor in catalysis.

Belongs to the uracil-DNA glycosylase (UDG) superfamily. UNG family.

The protein localises to the cytoplasm. It catalyses the reaction Hydrolyzes single-stranded DNA or mismatched double-stranded DNA and polynucleotides, releasing free uracil.. Its function is as follows. Excises uracil residues from the DNA which can arise as a result of misincorporation of dUMP residues by DNA polymerase or due to deamination of cytosine. This chain is Uracil-DNA glycosylase, found in Anoxybacillus flavithermus (strain DSM 21510 / WK1).